The chain runs to 236 residues: Small ribosomal subunit protein uS2c (236 aa).

This sequence belongs to the universal ribosomal protein uS2 family.

It is found in the plastid. It localises to the chloroplast. The polypeptide is Small ribosomal subunit protein uS2c (rps2) (Ceratophyllum demersum (Rigid hornwort)).